We begin with the raw amino-acid sequence, 553 residues long: CTP synthase (553 aa).

The tract at residues 1 to 270 (MTKFVFVTGG…DRIICEELRI (270 aa)) is amidoligase domain. Ser-13 lines the CTP pocket. Ser-13 lines the UTP pocket. ATP is bound by residues 14-19 (SLGKGI) and Asp-71. Mg(2+) contacts are provided by Asp-71 and Glu-144. Residues 151–153 (DIE), 191–196 (KTKPTQ), and Lys-227 contribute to the CTP site. UTP-binding positions include 191–196 (KTKPTQ) and Lys-227. The 253-residue stretch at 295–547 (TIGMVGKYVD…VEAALAHQQN (253 aa)) folds into the Glutamine amidotransferase type-1 domain. Gly-356 contacts L-glutamine. Catalysis depends on Cys-383, which acts as the Nucleophile; for glutamine hydrolysis. L-glutamine-binding positions include 384–387 (LGMQ), Glu-407, and Arg-473. Active-site residues include His-520 and Glu-522.

The protein belongs to the CTP synthase family. In terms of assembly, homotetramer.

It catalyses the reaction UTP + L-glutamine + ATP + H2O = CTP + L-glutamate + ADP + phosphate + 2 H(+). It carries out the reaction L-glutamine + H2O = L-glutamate + NH4(+). The catalysed reaction is UTP + NH4(+) + ATP = CTP + ADP + phosphate + 2 H(+). It functions in the pathway pyrimidine metabolism; CTP biosynthesis via de novo pathway; CTP from UDP: step 2/2. Allosterically activated by GTP, when glutamine is the substrate; GTP has no effect on the reaction when ammonia is the substrate. The allosteric effector GTP functions by stabilizing the protein conformation that binds the tetrahedral intermediate(s) formed during glutamine hydrolysis. Inhibited by the product CTP, via allosteric rather than competitive inhibition. Its function is as follows. Catalyzes the ATP-dependent amination of UTP to CTP with either L-glutamine or ammonia as the source of nitrogen. Regulates intracellular CTP levels through interactions with the four ribonucleotide triphosphates. The polypeptide is CTP synthase (Ralstonia pickettii (strain 12J)).